We begin with the raw amino-acid sequence, 321 residues long: Probable 1-aminocyclopropane-1-carboxylate oxidase (321 aa).

A Fe2OG dioxygenase domain is found at 159–259; the sequence is PTFGTKVSNY…RMSIASFYNP (101 aa). H183, D185, and H240 together coordinate Fe cation.

It belongs to the iron/ascorbate-dependent oxidoreductase family. The cofactor is Fe cation.

It carries out the reaction 1-aminocyclopropane-1-carboxylate + L-ascorbate + O2 = ethene + L-dehydroascorbate + hydrogen cyanide + CO2 + 2 H2O. The protein operates within alkene biosynthesis; ethylene biosynthesis via S-adenosyl-L-methionine; ethylene from S-adenosyl-L-methionine: step 2/2. The sequence is that of Probable 1-aminocyclopropane-1-carboxylate oxidase (ACO) from Dianthus caryophyllus (Carnation).